Here is a 543-residue protein sequence, read N- to C-terminus: Protein lin-14 (543 aa).

2 disordered regions span residues 165-228 (PNGH…SSNH) and 268-291 (APAT…PRKP). The span at 177–213 (SMQTDEQQVKWSSPSSVDSNGQKTDSSAASAGDNQNI) shows a compositional bias: polar residues. The segment covering 268 to 282 (APATNGTTNGATKAA) has biased composition (low complexity).

In terms of processing, cleaved by caspase ced-3 in vitro.

Its subcellular location is the nucleus. In terms of biological role, heterochronic protein which controls the choice of stage specific cell fates. Involved in the temporal progression of vulval fate patterning, possibly by inhibiting lin-12. Acts as a transcription factor involved in the stage-specific repression of insulin/insulin-like growth factor gene ins-33. In Caenorhabditis briggsae, this protein is Protein lin-14 (lin-14).